The chain runs to 309 residues: GTP cyclohydrolase MptA 2 (309 aa).

It belongs to the GTP cyclohydrolase IV family. As to quaternary structure, homodimer. It depends on Fe(2+) as a cofactor.

The enzyme catalyses GTP + H2O = 7,8-dihydroneopterin 2',3'-cyclic phosphate + formate + diphosphate + H(+). Its pathway is cofactor biosynthesis; 5,6,7,8-tetrahydromethanopterin biosynthesis. Its function is as follows. Converts GTP to 7,8-dihydro-D-neopterin 2',3'-cyclic phosphate, the first intermediate in the biosynthesis of coenzyme methanopterin. The protein is GTP cyclohydrolase MptA 2 of Methanocella arvoryzae (strain DSM 22066 / NBRC 105507 / MRE50).